Consider the following 358-residue polypeptide: scyllo-inositol 2-dehydrogenase (NADP(+)) IolW (358 aa).

This sequence belongs to the Gfo/Idh/MocA family.

It catalyses the reaction scyllo-inositol + NADP(+) = scyllo-inosose + NADPH + H(+). Its function is as follows. Catalyzes the reversible NADPH-dependent reduction of scyllo-inosose (SIS) to scyllo-inositol (SI). Cannot use NADH instead of NADPH. May be involved in reduction of not only SIS but also various oxidized compounds manifested upon stressful conditions. This is scyllo-inositol 2-dehydrogenase (NADP(+)) IolW from Bacillus subtilis (strain 168).